Consider the following 360-residue polypeptide: DNA replication and repair protein RecF (360 aa).

Residue 30 to 37 (GNNGSGKT) coordinates ATP.

It belongs to the RecF family.

Its subcellular location is the cytoplasm. Its function is as follows. The RecF protein is involved in DNA metabolism; it is required for DNA replication and normal SOS inducibility. RecF binds preferentially to single-stranded, linear DNA. It also seems to bind ATP. This is DNA replication and repair protein RecF from Mannheimia succiniciproducens (strain KCTC 0769BP / MBEL55E).